A 95-amino-acid chain; its full sequence is Small ribosomal subunit protein bS6 (95 aa).

Belongs to the bacterial ribosomal protein bS6 family.

Its function is as follows. Binds together with bS18 to 16S ribosomal RNA. This is Small ribosomal subunit protein bS6 from Aster yellows witches'-broom phytoplasma (strain AYWB).